The primary structure comprises 500 residues: NAD(P)H-quinone oxidoreductase chain 4, chloroplastic (500 aa).

A run of 14 helical transmembrane segments spans residues 4-24 (FPWL…IFFL), 35-55 (YTIC…CYHF), 87-107 (IGPV…AWPV), 113-130 (LFHF…GSFS), 134-154 (LLLF…LLSM), 167-187 (FILY…GVGL), 207-227 (VALE…KLPI), 242-262 (HYST…YGLI), 272-292 (AHSI…IYAA), 305-325 (IAYS…SITD), 330-350 (GAIL…FLAG), 386-406 (LALP…GIIT), 416-436 (IVIT…LLSM), and 462-482 (LFVS…PDFV).

This sequence belongs to the complex I subunit 4 family.

Its subcellular location is the plastid. It localises to the chloroplast thylakoid membrane. The catalysed reaction is a plastoquinone + NADH + (n+1) H(+)(in) = a plastoquinol + NAD(+) + n H(+)(out). It carries out the reaction a plastoquinone + NADPH + (n+1) H(+)(in) = a plastoquinol + NADP(+) + n H(+)(out). This Guizotia abyssinica (Niger) protein is NAD(P)H-quinone oxidoreductase chain 4, chloroplastic.